The following is a 545-amino-acid chain: Phenylalanine--tRNA ligase beta subunit (545 aa).

The 77-residue stretch at 270–346 folds into the B5 domain; the sequence is LEPKERLLTT…KGYGYENIKV (77 aa). Aspartate 324, aspartate 330, glutamate 333, and aspartate 334 together coordinate Mg(2+).

The protein belongs to the phenylalanyl-tRNA synthetase beta subunit family. Type 2 subfamily. Tetramer of two alpha and two beta subunits. Mg(2+) serves as cofactor.

The protein resides in the cytoplasm. The catalysed reaction is tRNA(Phe) + L-phenylalanine + ATP = L-phenylalanyl-tRNA(Phe) + AMP + diphosphate + H(+). In Methanosarcina acetivorans (strain ATCC 35395 / DSM 2834 / JCM 12185 / C2A), this protein is Phenylalanine--tRNA ligase beta subunit.